The following is a 232-amino-acid chain: tRNA (guanine-N(1)-)-methyltransferase (232 aa).

S-adenosyl-L-methionine contacts are provided by residues Gly112 and 132 to 137 (IGDYIL).

The protein belongs to the RNA methyltransferase TrmD family. Homodimer.

The protein localises to the cytoplasm. The catalysed reaction is guanosine(37) in tRNA + S-adenosyl-L-methionine = N(1)-methylguanosine(37) in tRNA + S-adenosyl-L-homocysteine + H(+). Its function is as follows. Specifically methylates guanosine-37 in various tRNAs. This is tRNA (guanine-N(1)-)-methyltransferase from Methylacidiphilum infernorum (isolate V4) (Methylokorus infernorum (strain V4)).